Here is a 365-residue protein sequence, read N- to C-terminus: UDP-N-acetylglucosamine--N-acetylmuramyl-(pentapeptide) pyrophosphoryl-undecaprenol N-acetylglucosamine transferase (365 aa).

UDP-N-acetyl-alpha-D-glucosamine-binding positions include 10–12, Asn124, Arg165, Ser193, Ile248, and Gln293; that span reads TGG.

The protein belongs to the glycosyltransferase 28 family. MurG subfamily.

Its subcellular location is the cell inner membrane. It carries out the reaction di-trans,octa-cis-undecaprenyl diphospho-N-acetyl-alpha-D-muramoyl-L-alanyl-D-glutamyl-meso-2,6-diaminopimeloyl-D-alanyl-D-alanine + UDP-N-acetyl-alpha-D-glucosamine = di-trans,octa-cis-undecaprenyl diphospho-[N-acetyl-alpha-D-glucosaminyl-(1-&gt;4)]-N-acetyl-alpha-D-muramoyl-L-alanyl-D-glutamyl-meso-2,6-diaminopimeloyl-D-alanyl-D-alanine + UDP + H(+). It participates in cell wall biogenesis; peptidoglycan biosynthesis. In terms of biological role, cell wall formation. Catalyzes the transfer of a GlcNAc subunit on undecaprenyl-pyrophosphoryl-MurNAc-pentapeptide (lipid intermediate I) to form undecaprenyl-pyrophosphoryl-MurNAc-(pentapeptide)GlcNAc (lipid intermediate II). The polypeptide is UDP-N-acetylglucosamine--N-acetylmuramyl-(pentapeptide) pyrophosphoryl-undecaprenol N-acetylglucosamine transferase (Geotalea uraniireducens (strain Rf4) (Geobacter uraniireducens)).